The chain runs to 150 residues: Large ribosomal subunit protein bL9 (150 aa).

The protein belongs to the bacterial ribosomal protein bL9 family.

In terms of biological role, binds to the 23S rRNA. The chain is Large ribosomal subunit protein bL9 from Herminiimonas arsenicoxydans.